Consider the following 148-residue polypeptide: Aspartate 1-decarboxylase (148 aa).

The Schiff-base intermediate with substrate; via pyruvic acid role is filled by S25. S25 bears the Pyruvic acid (Ser) mark. Residue T57 participates in substrate binding. Y58 serves as the catalytic Proton donor. Residue 73-75 (GAA) participates in substrate binding.

Belongs to the PanD family. As to quaternary structure, heterooctamer of four alpha and four beta subunits. Pyruvate serves as cofactor. Post-translationally, is synthesized initially as an inactive proenzyme, which is activated by self-cleavage at a specific serine bond to produce a beta-subunit with a hydroxyl group at its C-terminus and an alpha-subunit with a pyruvoyl group at its N-terminus.

It localises to the cytoplasm. It carries out the reaction L-aspartate + H(+) = beta-alanine + CO2. It functions in the pathway cofactor biosynthesis; (R)-pantothenate biosynthesis; beta-alanine from L-aspartate: step 1/1. Functionally, catalyzes the pyruvoyl-dependent decarboxylation of aspartate to produce beta-alanine. The chain is Aspartate 1-decarboxylase from Rhodococcus erythropolis (strain PR4 / NBRC 100887).